The following is a 1893-amino-acid chain: Plexin-A4 (1893 aa).

The signal sequence occupies residues 1 to 23 (MKAMPWNWTCLLSHLLVVGMGSS). One can recognise a Sema domain in the interval 24 to 506 (TLLPRQPPQL…SERQLTRVPV (483 aa)). The Extracellular segment spans residues 24-1236 (TLLPRQPPQL…IAPDSPLSLP (1213 aa)). 10 disulfide bridges follow: C94/C103, C129/C137, C283/C404, C299/C355, C373/C392, C509/C526, C515/C557, C518/C535, C529/C541, and C592/C611. In terms of domain architecture, PSI 1 spans 508 to 558 (SCGQYRSCGECLGSGDPHCGWCVLHNTCTRKERCERSREPRRFASEMKQCV). N654 is a glycosylation site (N-linked (GlcNAc...) asparagine). PSI domains lie at 654–701 (NCSV…EDCP) and 802–855 (KCGA…SKCT). IPT/TIG domains lie at 857 to 951 (PRIT…YYFM), 953 to 1036 (LTLA…FQYV), 1039 to 1138 (PTIV…FTYY), and 1141 to 1229 (PVFE…YIAP). N-linked (GlcNAc...) asparagine glycosylation is found at N1006, N1131, and N1179. The helical transmembrane segment at 1237–1257 (AIVSIAVAGGLLIIFIVAVLI) threads the bilayer. Residues 1258–1893 (AYKRKSRESD…QVITLMSLDS (636 aa)) lie on the Cytoplasmic side of the membrane. The residue at position 1349 (K1349) is an N6-acetyllysine.

Belongs to the plexin family. Interacts with NRP1 and NRP2. In terms of tissue distribution, expressed in the developing nervous system. Widely expressed in both the central and peripheral nervous systems. Expressed in the peripheral ganglia, somatosensory, olfactory, visual, auditory and equilibrium systems.

It localises to the cell membrane. Coreceptor for SEMA3A. Necessary for signaling by class 3 semaphorins and subsequent remodeling of the cytoskeleton. Plays a role in axon guidance in the developing nervous system. Class 3 semaphorins bind to a complex composed of a neuropilin and a plexin. The plexin modulates the affinity of the complex for specific semaphorins, and its cytoplasmic domain is required for the activation of down-stream signaling events in the cytoplasm. In Mus musculus (Mouse), this protein is Plexin-A4 (Plxna4).